Consider the following 266-residue polypeptide: MAVGKNKRLTKGGKKGAKKKIVDPFSKKDWYDVKAPAMFNIRNLGKTLVTRTQGTRIASDGLKGRVYEVSLADLQNDEVAFRKFKLITEDVQGKNCLTNFHGMDLTRDKMCSMVKKWQTMIEAHVDVKTTDGYLLRLFCVGFTKRRNNQIRKTSYAQHQQVRQIRKKMMEIMTREVQTNDLKEVVNKLIPDSIGKDIEKACQSIYPLHDVYVRKVKMLKKPKFELGKLMELHGEGGAGTAAKATGDDTGAKVERADGYEPPIQESV.

The tract at residues 236–266 (GAGTAAKATGDDTGAKVERADGYEPPIQESV) is disordered. Residues 244 to 257 (TGDDTGAKVERADG) show a composition bias toward basic and acidic residues.

The protein belongs to the eukaryotic ribosomal protein eS1 family. In terms of assembly, component of the small ribosomal subunit. Mature ribosomes consist of a small (40S) and a large (60S) subunit. The 40S subunit contains about 33 different proteins and 1 molecule of RNA (18S). The 60S subunit contains about 49 different proteins and 3 molecules of RNA (28S, 5.8S and 5S). Part of the small subunit (SSU) processome, composed of more than 70 proteins and the RNA chaperone small nucleolar RNA (snoRNA) U3.

The protein resides in the cytoplasm. It is found in the nucleus. Its subcellular location is the nucleolus. Its function is as follows. Component of the small ribosomal subunit. The ribosome is a large ribonucleoprotein complex responsible for the synthesis of proteins in the cell. Part of the small subunit (SSU) processome, first precursor of the small eukaryotic ribosomal subunit. During the assembly of the SSU processome in the nucleolus, many ribosome biogenesis factors, an RNA chaperone and ribosomal proteins associate with the nascent pre-rRNA and work in concert to generate RNA folding, modifications, rearrangements and cleavage as well as targeted degradation of pre-ribosomal RNA by the RNA exosome. May play a role during erythropoiesis. This chain is Small ribosomal subunit protein eS1 (rps3a), found in Tetraodon nigroviridis (Spotted green pufferfish).